A 593-amino-acid polypeptide reads, in one-letter code: Epidermal growth factor receptor kinase substrate 8-like protein 3 (593 aa).

The PTB domain occupies 28-155 (QHRVEHLMTC…ALEEELEQRP (128 aa)). 3 disordered regions span residues 149 to 171 (EELEQRPRLGGLQPGQDRWRGPA), 184 to 239 (LEPG…ERDE), and 374 to 451 (ADWT…PAQP). Ser231 carries the phosphoserine modification. Residues 386-401 (PTFSDDWQLPEPSSQA) show a composition bias toward polar residues. The span at 425–435 (PQEKTHNHDPQ) shows a compositional bias: basic and acidic residues. An SH3 domain is found at 450 to 509 (QPALKMQVLYEFEARNPRELTVVQGEKLEVLDHSKRWWLVKNEAGRSGYIPSNILEPLQP).

Belongs to the EPS8 family. As to quaternary structure, interacts with ABI1. Part of a complex that contains SOS1, ABI1 and EPS8L2. Interacts with FASLG.

The protein localises to the cytoplasm. This is Epidermal growth factor receptor kinase substrate 8-like protein 3 (EPS8L3) from Homo sapiens (Human).